The primary structure comprises 259 residues: MINPIAIKLGPLAIRWYSICIVTGLILAVYLTIREAPKKNIKSDDVLDFILIAFPLAIVGARLYYVIFDWDYYLKNPSEIPVIWHGGIAIYGGLLTGALVLFIFSYYRMIKPIDFLDVATPGVMLAQSIGRWGNFVNQEAYGKAVTQLNYLPDFIRKQMYIDGHYRTPTFLYESLWNLLGFIIIMILRRRPNLLKEGEVAFFYLIWYGSGRFVIEGMRTDSLMFASLRVSQWLSVLLVVVGVILIVIRRRNHAIPYYQC.

7 helical membrane-spanning segments follow: residues 9-29 (LGPL…ILAV), 48-68 (DFIL…YVIF), 83-103 (IWHG…VLFI), 114-133 (DFLD…GRWG), 167-187 (TPTF…IMIL), 197-217 (GEVA…IEGM), and 227-247 (LRVS…LIVI). Arginine 131 contributes to the a 1,2-diacyl-sn-glycero-3-phospho-(1'-sn-glycerol) binding site.

This sequence belongs to the Lgt family.

The protein resides in the cell membrane. It carries out the reaction L-cysteinyl-[prolipoprotein] + a 1,2-diacyl-sn-glycero-3-phospho-(1'-sn-glycerol) = an S-1,2-diacyl-sn-glyceryl-L-cysteinyl-[prolipoprotein] + sn-glycerol 1-phosphate + H(+). It participates in protein modification; lipoprotein biosynthesis (diacylglyceryl transfer). Catalyzes the transfer of the diacylglyceryl group from phosphatidylglycerol to the sulfhydryl group of the N-terminal cysteine of a prolipoprotein, the first step in the formation of mature lipoproteins. The chain is Phosphatidylglycerol--prolipoprotein diacylglyceryl transferase from Streptococcus mutans serotype c (strain ATCC 700610 / UA159).